Reading from the N-terminus, the 424-residue chain is Histidine--tRNA ligase (424 aa).

The protein belongs to the class-II aminoacyl-tRNA synthetase family. In terms of assembly, homodimer.

The protein localises to the cytoplasm. The enzyme catalyses tRNA(His) + L-histidine + ATP = L-histidyl-tRNA(His) + AMP + diphosphate + H(+). The polypeptide is Histidine--tRNA ligase (Edwardsiella ictaluri (strain 93-146)).